Reading from the N-terminus, the 231-residue chain is Lipoprotein-releasing system ATP-binding protein LolD (231 aa).

In terms of domain architecture, ABC transporter spans 11–231 (LRLEGLTRRF…TLRDGKLVPF (221 aa)). 47–54 (APSGTGKS) contributes to the ATP binding site.

The protein belongs to the ABC transporter superfamily. Lipoprotein translocase (TC 3.A.1.125) family. As to quaternary structure, the complex is composed of two ATP-binding proteins (LolD) and two transmembrane proteins (LolC and LolE).

It is found in the cell inner membrane. Its function is as follows. Part of the ABC transporter complex LolCDE involved in the translocation of mature outer membrane-directed lipoproteins, from the inner membrane to the periplasmic chaperone, LolA. Responsible for the formation of the LolA-lipoprotein complex in an ATP-dependent manner. This is Lipoprotein-releasing system ATP-binding protein LolD from Gluconobacter oxydans (strain 621H) (Gluconobacter suboxydans).